The chain runs to 202 residues: Small ribosomal subunit protein uS4 (202 aa).

Residues 18-42 form a disordered region; sequence LPGLTRKAAKRSYPPGQHGQARRKR. The region spanning 90 to 152 is the S4 RNA-binding domain; that stretch reads NRLDNVCFRL…KPSKKLAETN (63 aa).

The protein belongs to the universal ribosomal protein uS4 family. As to quaternary structure, part of the 30S ribosomal subunit. Contacts protein S5. The interaction surface between S4 and S5 is involved in control of translational fidelity.

One of the primary rRNA binding proteins, it binds directly to 16S rRNA where it nucleates assembly of the body of the 30S subunit. Functionally, with S5 and S12 plays an important role in translational accuracy. The protein is Small ribosomal subunit protein uS4 of Synechococcus sp. (strain RCC307).